The primary structure comprises 901 residues: Bifunctional protein STORR (901 aa).

A helical membrane pass occupies residues 12-32 (TSSVVALLLALVSILSSVVVL). C513 lines the heme pocket.

In the N-terminal section; belongs to the cytochrome P450 family. It in the C-terminal section; belongs to the aldo/keto reductase family. Requires heme as cofactor.

It is found in the membrane. It catalyses the reaction (R)-reticuline + NADP(+) = 1,2-dehydroreticuline + NADPH + H(+). It carries out the reaction (S)-reticuline + reduced [NADPH--hemoprotein reductase] + O2 = 1,2-dehydroreticuline + oxidized [NADPH--hemoprotein reductase] + 2 H2O + H(+). The protein operates within alkaloid biosynthesis; morphine biosynthesis. Bifunctional protein involved in the biosynthesis of morphinan-type benzylisoquinoline alkaloids. Required for the isomerization of (S)- to (R)-reticuline. The cytochrome P450 module is responsible for the conversion of (S)-reticuline to 1,2-dehydroreticuline while the oxidoreductase module converts 1,2-dehydroreticuline to (R)-reticuline. The chain is Bifunctional protein STORR from Papaver somniferum (Opium poppy).